The chain runs to 103 residues: Integration host factor subunit alpha (103 aa).

Residues 55–74 (CREKPQRPGRNPKTGEEMPI) are disordered.

The protein belongs to the bacterial histone-like protein family. As to quaternary structure, heterodimer of an alpha and a beta chain.

Functionally, this protein is one of the two subunits of integration host factor, a specific DNA-binding protein that functions in genetic recombination as well as in transcriptional and translational control. The chain is Integration host factor subunit alpha from Thiobacillus denitrificans (strain ATCC 25259 / T1).